Consider the following 221-residue polypeptide: Fanconi anemia core complex-associated protein 24 (221 aa).

In terms of assembly, belongs to the multisubunit FA complex composed of FANCA, FANCB, FANCC, FANCE, FANCF, FANCG, FANCL/PHF9, FANCM and FAAP24. Interacts with FANCM.

Its subcellular location is the nucleus. Its function is as follows. Plays a role in DNA repair through recruitment of the FA core complex to damaged DNA. Regulates FANCD2 monoubiquitination upon DNA damage. Induces chromosomal instability as well as hypersensitivity to DNA cross-linking agents, when repressed. Targets FANCM/FAAP24 complex to the DNA, preferentially to single strand DNA. The polypeptide is Fanconi anemia core complex-associated protein 24 (Mus musculus (Mouse)).